We begin with the raw amino-acid sequence, 142 residues long: Malate dehydrogenase, mitochondrial (142 aa).

NAD(+)-binding positions include A1–G6 and D26. 2 residues coordinate substrate: R73 and R79. NAD(+) contacts are provided by residues N86 and I109–N111. N111 serves as a coordination point for substrate.

The protein belongs to the LDH/MDH superfamily. MDH type 1 family. In terms of assembly, homodimer.

Its subcellular location is the mitochondrion matrix. The enzyme catalyses (S)-malate + NAD(+) = oxaloacetate + NADH + H(+). In Schistosoma mansoni (Blood fluke), this protein is Malate dehydrogenase, mitochondrial.